The chain runs to 151 residues: Ribosome maturation factor RimP (151 aa).

It belongs to the RimP family.

It is found in the cytoplasm. Its function is as follows. Required for maturation of 30S ribosomal subunits. In Haemophilus influenzae (strain 86-028NP), this protein is Ribosome maturation factor RimP.